Reading from the N-terminus, the 761-residue chain is BMP/retinoic acid-inducible neural-specific protein 1 (761 aa).

The signal sequence occupies residues 1 to 19; sequence MNWRFVELLYFLFIWGRIS. One can recognise an MACPF domain in the interval 68-251; the sequence is RYKIYREFAR…FVQSALSYIM (184 aa). N-linked (GlcNAc...) asparagine glycosylation is found at asparagine 156, asparagine 433, asparagine 443, asparagine 553, asparagine 599, asparagine 631, and asparagine 677.

It belongs to the BRINP family. In terms of tissue distribution, highly expressed in brain. Weakly expressed in heart, lung, skeletal muscle, kidney, thymus, prostate, testis and small intestine.

It is found in the cytoplasm. In terms of biological role, plays a role in neurogenesis and brain development. May suppress cell cycle progression in postmitotic neurons by inhibiting G1/S transition. This chain is BMP/retinoic acid-inducible neural-specific protein 1 (BRINP1), found in Homo sapiens (Human).